A 333-amino-acid chain; its full sequence is Cysteine protease (333 aa).

The signal sequence occupies residues 1-18 (MKFLLVAALCALVAIGSC). The propeptide at 19–108 (KPTREEIKTF…MEAAKEPLIN (90 aa)) is activation peptide. N-linked (GlcNAc...) asparagine glycosylation is present at Asn93. Disulfide bonds link Cys134–Cys182 and Cys168–Cys214. Cys137 is an active-site residue. Residues His281 and Asn301 contribute to the active site.

This sequence belongs to the peptidase C1 family. In terms of assembly, homodimer.

In terms of biological role, cysteine protease. This Blomia tropicalis (Mite) protein is Cysteine protease.